The chain runs to 177 residues: N5-carboxyaminoimidazole ribonucleotide mutase (177 aa).

3 residues coordinate substrate: Ser-18, Asp-21, and Arg-48.

It belongs to the AIR carboxylase family. Class I subfamily.

It carries out the reaction 5-carboxyamino-1-(5-phospho-D-ribosyl)imidazole + H(+) = 5-amino-1-(5-phospho-D-ribosyl)imidazole-4-carboxylate. The protein operates within purine metabolism; IMP biosynthesis via de novo pathway; 5-amino-1-(5-phospho-D-ribosyl)imidazole-4-carboxylate from 5-amino-1-(5-phospho-D-ribosyl)imidazole (N5-CAIR route): step 2/2. In terms of biological role, catalyzes the conversion of N5-carboxyaminoimidazole ribonucleotide (N5-CAIR) to 4-carboxy-5-aminoimidazole ribonucleotide (CAIR). The protein is N5-carboxyaminoimidazole ribonucleotide mutase of Pyrococcus horikoshii (strain ATCC 700860 / DSM 12428 / JCM 9974 / NBRC 100139 / OT-3).